Reading from the N-terminus, the 481-residue chain is NADH-quinone oxidoreductase subunit N (481 aa).

The next 13 membrane-spanning stretches (helical) occupy residues 14–34 (LILS…GDGF), 38–57 (IGWG…TGPA), 76–96 (FAKL…PGFF), 108–128 (PVLI…GDLL), 162–182 (FVLG…LYGF), 204–224 (MFGM…VPFH), 235–255 (PTPV…ALLL), 272–292 (IVVF…IGQT), 297–317 (LLAY…AAGS), 323–343 (ATMT…ICVL), 369–389 (LAAA…LFGF), 403–423 (GFWP…FYYL), and 449–469 (GLIT…IPLL).

This sequence belongs to the complex I subunit 2 family. In terms of assembly, NDH-1 is composed of 14 different subunits. Subunits NuoA, H, J, K, L, M, N constitute the membrane sector of the complex.

The protein resides in the cell inner membrane. It catalyses the reaction a quinone + NADH + 5 H(+)(in) = a quinol + NAD(+) + 4 H(+)(out). In terms of biological role, NDH-1 shuttles electrons from NADH, via FMN and iron-sulfur (Fe-S) centers, to quinones in the respiratory chain. The immediate electron acceptor for the enzyme in this species is believed to be ubiquinone. Couples the redox reaction to proton translocation (for every two electrons transferred, four hydrogen ions are translocated across the cytoplasmic membrane), and thus conserves the redox energy in a proton gradient. The chain is NADH-quinone oxidoreductase subunit N from Rhizorhabdus wittichii (strain DSM 6014 / CCUG 31198 / JCM 15750 / NBRC 105917 / EY 4224 / RW1) (Sphingomonas wittichii).